We begin with the raw amino-acid sequence, 121 residues long: Flagellar protein FliT (121 aa).

The segment at methionine 1–leucine 50 is required for homodimerization. The tract at residues methionine 60–valine 98 is fliD binding.

This sequence belongs to the FliT family. As to quaternary structure, homodimer. Interacts with FliD and FlhC.

The protein resides in the cytoplasm. It is found in the cytosol. In terms of biological role, dual-function protein that regulates the transcription of class 2 flagellar operons and that also acts as an export chaperone for the filament-capping protein FliD. As a transcriptional regulator, acts as an anti-FlhDC factor; it directly binds FlhC, thus inhibiting the binding of the FlhC/FlhD complex to class 2 promoters, resulting in decreased expression of class 2 flagellar operons. As a chaperone, effects FliD transition to the membrane by preventing its premature polymerization, and by directing it to the export apparatus. The sequence is that of Flagellar protein FliT from Escherichia coli O6:K15:H31 (strain 536 / UPEC).